A 64-amino-acid chain; its full sequence is UPF0434 protein TERTU_2813 (64 aa).

This sequence belongs to the UPF0434 family.

The sequence is that of UPF0434 protein TERTU_2813 from Teredinibacter turnerae (strain ATCC 39867 / T7901).